A 157-amino-acid chain; its full sequence is Homeobox protein DBX2 (157 aa).

The homeobox DNA-binding region spans 9–68; the sequence is GILRRAVFSEDQRKALEKMFQKQKYISKTDRKKLAINLGLKESQVKIWFQNRRMKWRNSK. A disordered region spans residues 105–157; the sequence is SQEQTSPRWKEKSPGNSERLTSTQPPPRANSSQSPLYLYPDHDTANKAVTSSD. Over residues 118-139 the composition is skewed to polar residues; the sequence is PGNSERLTSTQPPPRANSSQSP.

This sequence belongs to the H2.0 homeobox family. In terms of tissue distribution, localized to the central nervous system during embryogenesis. It is found restricted to the rostro-caudal and dorso-ventral regions of the hindbrain. In the ventricular zone of the spinal cord, it localizes to the dorsal part of the basal plate. In the adult, it is detected in ovary.

The protein localises to the nucleus. Its function is as follows. Appears to perform a very early function in establishing the identity of a subset of cells that originate in the region of the ventricular zone in the developing spinal cord and in the hindbrain. The protein is Homeobox protein DBX2 (DBX2) of Gallus gallus (Chicken).